The chain runs to 520 residues: MLARGLPFRSALVKACPPLLNTGREGWGHHRVGTGEGAGISTRTPRPYSEIPSPGDNGWINLYHFWRKKGSQRIHFHHIENFQKYGPIYREKLGNLESVYIIHPEGVAHLFKFEGSYPQRYDIPPWLAYHRYYQKPIGVLFKKSGAWKKDRVVLNTEVMAPEAIKNFIPLLNPVSQDFVSLLHKRIKQQGSGKFVGDIKEDLFRFAFESITNVMFGERLGMLEDTVDTEAQKFIDAVYKMFHTSVPLLNLPPELYRLFRTKTWRDHVAAWDTIFNKAEKYTEIFYQDLRQKTEFRNYPGILYHLLKSEKMLLEDVKANITEMLAGGVDTTSMTLQWHLYEMARSLNVQEMLRKEVLNARRQAEGDISKMLQMVPLLKASIKETLRLHPISVTLQRYPESDLVLQDYLIPAKTLVQVAIYAMGRDPAFFSNPDKFDPTRWLGKDKDLIHFRNLGFGWGVRQCVGRRIAELEMTLFLIHILENFRVEMQQIGDVNTIFNLILTPDKPIFLVFRPFNQGPPQA.

Residues 1-39 (MLARGLPFRSALVKACPPLLNTGREGWGHHRVGTGEGAG) constitute a mitochondrion transit peptide. A disordered region spans residues 27–47 (WGHHRVGTGEGAGISTRTPRP). Cys461 contributes to the heme binding site.

It belongs to the cytochrome P450 family. Interacts with FDX1/adrenodoxin. It depends on heme as a cofactor.

It localises to the mitochondrion inner membrane. It catalyses the reaction 6 reduced [adrenodoxin] + cholesterol + 3 O2 + 6 H(+) = 4-methylpentanal + pregnenolone + 6 oxidized [adrenodoxin] + 4 H2O. It carries out the reaction 2 reduced [adrenodoxin] + cholesterol + O2 + 2 H(+) = (22R)-hydroxycholesterol + 2 oxidized [adrenodoxin] + H2O. The catalysed reaction is (22R)-hydroxycholesterol + 2 reduced [adrenodoxin] + O2 + 2 H(+) = (20R,22R)-20,22-dihydroxycholesterol + 2 oxidized [adrenodoxin] + H2O. The enzyme catalyses (20R,22R)-20,22-dihydroxycholesterol + 2 reduced [adrenodoxin] + O2 + 2 H(+) = 4-methylpentanal + pregnenolone + 2 oxidized [adrenodoxin] + 2 H2O. The protein operates within lipid metabolism; C21-steroid hormone metabolism. It participates in steroid metabolism; cholesterol metabolism. A cytochrome P450 monooxygenase that catalyzes the side-chain hydroxylation and cleavage of cholesterol to pregnenolone, the precursor of most steroid hormones. Catalyzes three sequential oxidation reactions of cholesterol, namely the hydroxylation at C22 followed with the hydroxylation at C20 to yield 20R,22R-hydroxycholesterol that is further cleaved between C20 and C22 to yield the C21-steroid pregnenolone and 4-methylpentanal. Mechanistically, uses molecular oxygen inserting one oxygen atom into a substrate and reducing the second into a water molecule. Two electrons are provided by NADPH via a two-protein mitochondrial transfer system comprising flavoprotein FDXR (adrenodoxin/ferredoxin reductase) and nonheme iron-sulfur protein FDX1 or FDX2 (adrenodoxin/ferredoxin). The polypeptide is Cholesterol side-chain cleavage enzyme, mitochondrial (Ovis aries (Sheep)).